A 625-amino-acid polypeptide reads, in one-letter code: Endoglucanase 13 (625 aa).

The signal sequence occupies residues 1 to 34 (MAATMNKTPATTFLLIPAAASLVLLLAAAASVEA). Aspartate 91 functions as the Nucleophile in the catalytic mechanism. Residue histidine 427 is part of the active site. The N-linked (GlcNAc...) asparagine glycan is linked to asparagine 440. Active-site residues include aspartate 479 and glutamate 488. Residues 509–530 (ADNTPEYTPAPNAPSPSNGGSP) form a disordered region.

It belongs to the glycosyl hydrolase 9 (cellulase E) family. As to expression, expressed in roots and flowers.

Its subcellular location is the secreted. The catalysed reaction is Endohydrolysis of (1-&gt;4)-beta-D-glucosidic linkages in cellulose, lichenin and cereal beta-D-glucans.. This chain is Endoglucanase 13 (GLU6), found in Oryza sativa subsp. japonica (Rice).